We begin with the raw amino-acid sequence, 226 residues long: UPF0758 protein GWCH70_2550 (226 aa).

In terms of domain architecture, MPN spans 104–226; the sequence is VIRSPEDGAK…FVSLKEKGYV (123 aa). Zn(2+)-binding residues include H175, H177, and D188. The JAMM motif motif lies at 175-188; sequence HNHPSGDPTPSRED.

It belongs to the UPF0758 family.

The sequence is that of UPF0758 protein GWCH70_2550 from Geobacillus sp. (strain WCH70).